A 337-amino-acid chain; its full sequence is UDP-N-acetylenolpyruvoylglucosamine reductase (337 aa).

The 172-residue stretch at A16 to A187 folds into the FAD-binding PCMH-type domain. R160 is a catalytic residue. S237 serves as the catalytic Proton donor. E333 is an active-site residue.

The cofactor is FAD.

It localises to the cytoplasm. The catalysed reaction is UDP-N-acetyl-alpha-D-muramate + NADP(+) = UDP-N-acetyl-3-O-(1-carboxyvinyl)-alpha-D-glucosamine + NADPH + H(+). The protein operates within cell wall biogenesis; peptidoglycan biosynthesis. Its function is as follows. Cell wall formation. The chain is UDP-N-acetylenolpyruvoylglucosamine reductase from Dechloromonas aromatica (strain RCB).